The primary structure comprises 106 residues: Large ribosomal subunit protein cL38 (106 aa).

A chloroplast-targeting transit peptide spans 1-39 (MSVSAIFGTGIVTVAASPVLRQFQVPKLGNGGGLGMVIE). The segment at 42-70 (SRPQKKSTAHHRKTRPKKTQPWDIKRKPT) is disordered. Residues 44–59 (PQKKSTAHHRKTRPKK) show a composition bias toward basic residues.

Belongs to the chloroplast-specific ribosomal protein cL38 family. As to quaternary structure, part of the 50S ribosomal subunit.

The protein resides in the plastid. It localises to the chloroplast. The chain is Large ribosomal subunit protein cL38 (PSRP6) from Arabidopsis thaliana (Mouse-ear cress).